The sequence spans 176 residues: NAD(P)H-quinone oxidoreductase subunit J (176 aa).

The protein belongs to the complex I 30 kDa subunit family. In terms of assembly, NDH-1 can be composed of about 15 different subunits; different subcomplexes with different compositions have been identified which probably have different functions.

The protein localises to the cellular thylakoid membrane. The catalysed reaction is a plastoquinone + NADH + (n+1) H(+)(in) = a plastoquinol + NAD(+) + n H(+)(out). It carries out the reaction a plastoquinone + NADPH + (n+1) H(+)(in) = a plastoquinol + NADP(+) + n H(+)(out). In terms of biological role, NDH-1 shuttles electrons from an unknown electron donor, via FMN and iron-sulfur (Fe-S) centers, to quinones in the respiratory and/or the photosynthetic chain. The immediate electron acceptor for the enzyme in this species is believed to be plastoquinone. Couples the redox reaction to proton translocation, and thus conserves the redox energy in a proton gradient. Cyanobacterial NDH-1 also plays a role in inorganic carbon-concentration. The sequence is that of NAD(P)H-quinone oxidoreductase subunit J from Prochlorococcus marinus (strain MIT 9515).